A 262-amino-acid chain; its full sequence is MKIHDFKIKKQEQKKISMLTCYDYPSACIVAESNIDCVLVGDSVAMAVHGHPTTIMATIEMMELHTQAVARGLGKQFLITDLPFLGHKSSQGHTVENVKRLLQAGAQAVKIEGADKDTCQTISHLVNAGIPVMGHIGLTPQSIHQLGGYKVQGKNSEQAETLLQQAATLEQAGCFAVVIECVPQELAKTITDSLVIPTIGIGAGPGTDGQVLVWHDMLGLQTSFNPKFVKKYFRAKDHFIEALNSYVQQVQQMHFPANEHSF.

2 residues coordinate Mg(2+): Asp-42 and Asp-81. 3-methyl-2-oxobutanoate contacts are provided by residues 42-43 (DS), Asp-81, and Lys-110. Glu-112 is a binding site for Mg(2+). The active-site Proton acceptor is Glu-180.

This sequence belongs to the PanB family. Homodecamer; pentamer of dimers. The cofactor is Mg(2+).

The protein localises to the cytoplasm. The catalysed reaction is 3-methyl-2-oxobutanoate + (6R)-5,10-methylene-5,6,7,8-tetrahydrofolate + H2O = 2-dehydropantoate + (6S)-5,6,7,8-tetrahydrofolate. Its pathway is cofactor biosynthesis; (R)-pantothenate biosynthesis; (R)-pantoate from 3-methyl-2-oxobutanoate: step 1/2. In terms of biological role, catalyzes the reversible reaction in which hydroxymethyl group from 5,10-methylenetetrahydrofolate is transferred onto alpha-ketoisovalerate to form ketopantoate. The chain is 3-methyl-2-oxobutanoate hydroxymethyltransferase from Legionella pneumophila subsp. pneumophila (strain Philadelphia 1 / ATCC 33152 / DSM 7513).